The following is a 154-amino-acid chain: Anaerobic ribonucleoside-triphosphate reductase-activating protein (154 aa).

Cys26, Cys30, and Cys33 together coordinate [4Fe-4S] cluster. S-adenosyl-L-methionine contacts are provided by residues 32 to 34 (GCY) and Gly74.

Belongs to the organic radical-activating enzymes family. In terms of assembly, forms a tetramer composed of two NrdD and two NrdG subunits. [4Fe-4S] cluster serves as cofactor.

Its subcellular location is the cytoplasm. It carries out the reaction glycyl-[protein] + reduced [flavodoxin] + S-adenosyl-L-methionine = glycin-2-yl radical-[protein] + semiquinone [flavodoxin] + 5'-deoxyadenosine + L-methionine + H(+). Activation of anaerobic ribonucleoside-triphosphate reductase under anaerobic conditions by generation of an organic free radical, using S-adenosylmethionine and reduced flavodoxin as cosubstrates to produce 5'-deoxy-adenosine. The sequence is that of Anaerobic ribonucleoside-triphosphate reductase-activating protein (nrdG) from Salmonella typhimurium (strain LT2 / SGSC1412 / ATCC 700720).